We begin with the raw amino-acid sequence, 461 residues long: Bifunctional protein GlmU (461 aa).

The pyrophosphorylase stretch occupies residues 1–236; it reads MNVLLQELFI…VFEIFGINNR (236 aa). Residues Lys27, Gln80, 85 to 86, 109 to 111, Gly146, Glu160, Asn175, and Asn234 each bind UDP-N-acetyl-alpha-D-glucosamine; these read GT and YGD. Asp111 serves as a coordination point for Mg(2+). Asn234 provides a ligand contact to Mg(2+). The interval 237 to 257 is linker; sequence FQLMKLEKIYQIEQAKKLLLN. The segment at 258–461 is N-acetyltransferase; sequence GVTLSDYNRF…SILRKENNSK (204 aa). Lys358 is a binding site for UDP-N-acetyl-alpha-D-glucosamine. His370 (proton acceptor) is an active-site residue. UDP-N-acetyl-alpha-D-glucosamine-binding residues include Tyr373 and Asn384. Acetyl-CoA contacts are provided by Ala387, Ala430, and Arg447.

It in the N-terminal section; belongs to the N-acetylglucosamine-1-phosphate uridyltransferase family. This sequence in the C-terminal section; belongs to the transferase hexapeptide repeat family. As to quaternary structure, homotrimer. It depends on Mg(2+) as a cofactor.

The protein localises to the cytoplasm. The enzyme catalyses alpha-D-glucosamine 1-phosphate + acetyl-CoA = N-acetyl-alpha-D-glucosamine 1-phosphate + CoA + H(+). It catalyses the reaction N-acetyl-alpha-D-glucosamine 1-phosphate + UTP + H(+) = UDP-N-acetyl-alpha-D-glucosamine + diphosphate. The protein operates within nucleotide-sugar biosynthesis; UDP-N-acetyl-alpha-D-glucosamine biosynthesis; N-acetyl-alpha-D-glucosamine 1-phosphate from alpha-D-glucosamine 6-phosphate (route II): step 2/2. It participates in nucleotide-sugar biosynthesis; UDP-N-acetyl-alpha-D-glucosamine biosynthesis; UDP-N-acetyl-alpha-D-glucosamine from N-acetyl-alpha-D-glucosamine 1-phosphate: step 1/1. Its pathway is bacterial outer membrane biogenesis; LPS lipid A biosynthesis. Catalyzes the last two sequential reactions in the de novo biosynthetic pathway for UDP-N-acetylglucosamine (UDP-GlcNAc). The C-terminal domain catalyzes the transfer of acetyl group from acetyl coenzyme A to glucosamine-1-phosphate (GlcN-1-P) to produce N-acetylglucosamine-1-phosphate (GlcNAc-1-P), which is converted into UDP-GlcNAc by the transfer of uridine 5-monophosphate (from uridine 5-triphosphate), a reaction catalyzed by the N-terminal domain. In Wigglesworthia glossinidia brevipalpis, this protein is Bifunctional protein GlmU.